Here is a 223-residue protein sequence, read N- to C-terminus: Probable Brix domain-containing ribosomal biogenesis protein (223 aa).

Residues 1–196 (MMLITTSHRP…IWIMEDGRRW (196 aa)) enclose the Brix domain.

Its function is as follows. Probably involved in the biogenesis of the ribosome. This Pyrococcus furiosus (strain ATCC 43587 / DSM 3638 / JCM 8422 / Vc1) protein is Probable Brix domain-containing ribosomal biogenesis protein.